The chain runs to 579 residues: Arginine--tRNA ligase (579 aa).

The 'HIGH' region signature appears at 127 to 137 (PNLAKEMHVGH).

Belongs to the class-I aminoacyl-tRNA synthetase family. Monomer.

It is found in the cytoplasm. It carries out the reaction tRNA(Arg) + L-arginine + ATP = L-arginyl-tRNA(Arg) + AMP + diphosphate. The chain is Arginine--tRNA ligase from Azotobacter vinelandii (strain DJ / ATCC BAA-1303).